The chain runs to 455 residues: ATP-dependent protease ATPase subunit HslU (455 aa).

Residues valine 23, 65–70 (GVGKTE), aspartate 266, glutamate 333, and arginine 405 contribute to the ATP site.

It belongs to the ClpX chaperone family. HslU subfamily. A double ring-shaped homohexamer of HslV is capped on each side by a ring-shaped HslU homohexamer. The assembly of the HslU/HslV complex is dependent on binding of ATP.

The protein localises to the cytoplasm. Its function is as follows. ATPase subunit of a proteasome-like degradation complex; this subunit has chaperone activity. The binding of ATP and its subsequent hydrolysis by HslU are essential for unfolding of protein substrates subsequently hydrolyzed by HslV. HslU recognizes the N-terminal part of its protein substrates and unfolds these before they are guided to HslV for hydrolysis. In Xanthomonas campestris pv. campestris (strain 8004), this protein is ATP-dependent protease ATPase subunit HslU.